The primary structure comprises 249 residues: 5'-nucleotidase SurE (249 aa).

A divalent metal cation contacts are provided by D9, D10, S40, and N92.

It belongs to the SurE nucleotidase family. A divalent metal cation is required as a cofactor.

Its subcellular location is the cytoplasm. The catalysed reaction is a ribonucleoside 5'-phosphate + H2O = a ribonucleoside + phosphate. Nucleotidase that shows phosphatase activity on nucleoside 5'-monophosphates. The protein is 5'-nucleotidase SurE of Shewanella frigidimarina (strain NCIMB 400).